A 58-amino-acid chain; its full sequence is U11-ctenitoxin-Pn1b (58 aa).

Intrachain disulfides connect cysteine 2-cysteine 16, cysteine 9-cysteine 22, cysteine 15-cysteine 40, cysteine 24-cysteine 38, and cysteine 48-cysteine 55.

As to expression, expressed by the venom gland.

It localises to the secreted. In terms of biological role, non-toxic to mice. The chain is U11-ctenitoxin-Pn1b from Phoneutria nigriventer (Brazilian armed spider).